The chain runs to 329 residues: MKFGSKIRRLAVAAVAGAIALGASFAVAQAPTFFRIGTGGTAGTYYPIGGLIANAISGAGEKGVPGLVATAVSSNGSVANINAIKSGALESGFTQSDVAYWAYNGTGLYDGKGKVEDLRLLATLYPETIHIVARKDANIKSVADLKGKRVSLDEPGSGTIVDARIVLEAYGLTEDDIKAEHLKPGPAGERLKDGALDAYFFVGGYPTGAISELAISNGISLVPISGPEADKILEKYSFFSKDVVPAGAYKDVAETPTLAVAAQWVTSAKQPDDLIYNITKVLWNEDTRKALDAGHAKGKLIKLDSATSSLGIPLHPGAERFYKEAGVLK.

The first 28 residues, 1–28 (MKFGSKIRRLAVAAVAGAIALGASFAVA), serve as a signal peptide directing secretion.

The sequence is that of 31 kDa immunogenic protein (bcsP31) from Brucella abortus biovar 1 (strain 9-941).